Reading from the N-terminus, the 1021-residue chain is Ribosome quality control complex subunit 2 (1021 aa).

Positions 348-388 (IEAQKLKKRAHDRLATAERRLESAKEDQARKLQSLQDAQAT) form a coiled coil. The disordered stretch occupies residues 457-484 (NPESVDNSDESSETSDDDLDDSDDDNKV). Residues 462-480 (DNSDESSETSDDDLDDSDD) are compositionally biased toward acidic residues. S478 bears the Phosphoserine mark. Coiled-coil stretches lie at residues 507 to 546 (NARK…DLKR) and 698 to 727 (DEKS…LKME). Polar residues-rich tracts occupy residues 746–761 (YNED…TTGS) and 839–856 (ISSQ…TPTA). Disordered stretches follow at residues 746–801 (YNED…TALE) and 832–905 (HAAR…VESF). Basic and acidic residues predominate over residues 876–905 (DQSRNSEAENEKGLSTEQRDEKKHAKVESF).

The protein belongs to the NEMF family. As to quaternary structure, component of the ribosome quality control complex (RQC), composed of the E3 ubiquitin ligase rkr1/ltn1, rqc1 and mtr1/rqc2, as well as cdc48 and its ubiquitin-binding cofactors associated with the 60S ribosomal subunit. RQC2 binds to the 40S-binding surface of tRNAs.

It is found in the cytoplasm. Functionally, key component of the ribosome quality control complex (RQC), a ribosome-associated complex that mediates the extraction of incompletely synthesized nascent chains from stalled ribosomes as well as their ubiquitin-mediated proteasomal degradation. Thereby, frees 60S subunit ribosomes from the stalled translation complex and prevents the accumulation of nascent polypeptide chains that are potentially toxic for the cell. Within the RQC complex, mtr1/rqc2 specifically binds stalled 60S ribosomal subunits by recognizing an exposed, nascent chain-conjugated tRNA moiety and promotes the recruitment of rkr1/ltn1 to stalled 60S subunits. Following binding to stalled 60S ribosomal subunits, mtr1/rqc2 mediates CAT tailing by recruiting alanine- and threonine-charged tRNA to the A-site and directing the elongation of stalled nascent chains independently of mRNA or 40S subunits, leading to non-templated C-terminal Ala and Thr extensions (CAT tails). CAT tails promote the rkr1/ltn1-mediated ubiquitination of incompletely synthesized nascent polypeptides: CAT tailing facilitates rkr1/ltn1-dependent ubiquitination by exposing lysine residues that would otherwise remain buried in the ribosomal exit tunnel. Following ubiquitination, incompletely synthesized nascent polypeptides are recognized by CDC48 and degraded by the proteasome. CAT-tailed proteins tend to aggregate and sequester chaperones and can induce proteotoxic stress; their rkr1/ltn1-dependent ubiquitination and degradation is required to prevent proteotoxic stress. The chain is Ribosome quality control complex subunit 2 from Schizosaccharomyces pombe (strain 972 / ATCC 24843) (Fission yeast).